The primary structure comprises 732 residues: E3 ubiquitin-protein ligase TRIM56 (732 aa).

An RING-type zinc finger spans residues 21-60; it reads CKICLEQLRVPKTLPCLHTYCQDCLAQLAEGSRLRCPECR. A B box-type zinc finger spans residues 164-205; sequence RQAAQCPQHPGEALRFLCQPCSQLLCRECRLDPHLDHPCLPL. Positions 169, 172, 192, and 197 each coordinate Zn(2+). Residues 211-286 adopt a coiled-coil conformation; sequence ARRPGLEELL…LRAHVEAAEE (76 aa). The segment covering 374 to 384 has biased composition (basic and acidic residues); it reads LPQKDSGKDGA. The tract at residues 374 to 462 is disordered; sequence LPQKDSGKDG…PAPGPNLEGS (89 aa). Over residues 389 to 405 the composition is skewed to polar residues; the sequence is GDATQPQSRDGVQTPNQ. Position 402 is a phosphothreonine (T402). The span at 407–416 shows a compositional bias: basic and acidic residues; the sequence is DGAKTPKESR. T419 carries the phosphothreonine modification. Residues 434–446 show a composition bias toward basic residues; the sequence is SNKKRKFKGRLKS. S452 is modified (phosphoserine).

Belongs to the TRIM/RBCC family. As to quaternary structure, interacts with STING1. Interacts with TICAM1.

Its subcellular location is the cytoplasm. The catalysed reaction is S-ubiquitinyl-[E2 ubiquitin-conjugating enzyme]-L-cysteine + [acceptor protein]-L-lysine = [E2 ubiquitin-conjugating enzyme]-L-cysteine + N(6)-ubiquitinyl-[acceptor protein]-L-lysine.. The protein operates within protein modification; protein ubiquitination. E3 ubiquitin-protein ligase that plays a key role in innate antiviral immunity by mediating ubiquitination of CGAS and STING1. In response to pathogen- and host-derived double-stranded DNA (dsDNA), targets STING1 to 'Lys-63'-linked ubiquitination, thereby promoting its homodimerization, a step required for the production of type I interferon IFN-beta. Also mediate monoubiquitination of CGAS, thereby promoting CGAS oligomerization and subsequent activation. Independently of its E3 ubiquitin ligase activity, positive regulator of TLR3 signaling. Potentiates extracellular double stranded RNA (dsRNA)-induced expression of IFNB1 and interferon-stimulated genes ISG15, IFIT1/ISG56, CXCL10, OASL and CCL5/RANTES. Restricts bovine viral diarrhea virus (BVDV) replication. In Bos taurus (Bovine), this protein is E3 ubiquitin-protein ligase TRIM56.